A 366-amino-acid chain; its full sequence is Inositol 2-dehydrogenase (366 aa).

It belongs to the Gfo/Idh/MocA family. Homotetramer.

It carries out the reaction myo-inositol + NAD(+) = scyllo-inosose + NADH + H(+). In terms of biological role, involved in the oxidation of myo-inositol (MI) to 2-keto-myo-inositol (2KMI or 2-inosose). The sequence is that of Inositol 2-dehydrogenase from Rhodococcus jostii (strain RHA1).